An 85-amino-acid polypeptide reads, in one-letter code: Large ribosomal subunit protein bL27 (85 aa).

The segment at 1 to 23 is disordered; sequence MAHKKGQGSTQNNRDSAGRRLGV.

Belongs to the bacterial ribosomal protein bL27 family.

This chain is Large ribosomal subunit protein bL27, found in Helicobacter hepaticus (strain ATCC 51449 / 3B1).